A 962-amino-acid polypeptide reads, in one-letter code: Ubiquitin carboxyl-terminal hydrolase 4 (962 aa).

Residues Pro11–Val122 form the DUSP domain. Residues Thr27–Glu216 are necessary for interaction with SART3. Residues Val133–Lys141 carry the Nuclear export signal motif. The region spanning Leu142–Arg226 is the Ubiquitin-like 1 domain. The tract at residues Glu220–Ala249 is disordered. Positions Pro225–Ala249 are enriched in polar residues. The required for USP4 activation by providing conformational flexibility between the DUSP and catalytic domains stretch occupies residues Leu229–Pro295. A USP domain is found at Cys302–Arg922. The active-site Nucleophile is Cys311. A regulates ubiquitin dissociation region spans residues Pro384–Phe386. Residues Leu405–Glu407 are necessary for interaction with RBL2. Residue Ser445 is modified to Phosphoserine. Positions Leu459–Glu463 are necessary for interaction with RB1 and RBL2. Zn(2+) contacts are provided by Cys461 and Cys464. Positions Leu483–Ser571 constitute a Ubiquitin-like 2 domain. The interval Lys485–Ala774 is interacts with DUSP and ubiquitin-like 1 domains and is required for USP4 activation. A disordered region spans residues Glu638–Gln699. The residue at position 655 (Ser655) is a Phosphoserine. Positions Glu657–His666 are enriched in acidic residues. A phosphoserine mark is found at Ser675 and Ser680. The Nuclear localization signal signature appears at Gln766–Lys771. Zn(2+) contacts are provided by Cys798 and Cys801. His880 acts as the Proton acceptor in catalysis. The span at Ser928–Gly937 shows a compositional bias: low complexity. Residues Ser928–Asn962 are disordered. Residues Gly952–Asn962 show a composition bias toward acidic residues.

Belongs to the peptidase C19 family. USP4 subfamily. Interacts with RB1 (both dephosphorylated and hypophosphorylated forms). Interacts with RBL1 and RBL2. Interacts with ADORA2A (via cytoplasmic C-terminus); the interaction is direct. Interacts with SART3; recruits USP4 to its substrate PRPF3. In terms of processing, phosphorylated at Ser-445 by PKB/AKT1 in response to EGF stimulus, promoting its ability deubiquitinate RHEB. Post-translationally, monoubiquitinated by TRIM21. Ubiquitination does not lead to its proteasomal degradation. Autodeubiquitinated. In terms of tissue distribution, expressed in brain, kidney, liver and spleen (at protein level).

It is found in the cytoplasm. The protein resides in the nucleus. The enzyme catalyses Thiol-dependent hydrolysis of ester, thioester, amide, peptide and isopeptide bonds formed by the C-terminal Gly of ubiquitin (a 76-residue protein attached to proteins as an intracellular targeting signal).. The completion of the deubiquitinase reaction is mediated by the DUSP and ubiquitin-like 1 domains which promotes the release of ubiquitin from the catalytic site enabling subsequent reactions to occur. Its function is as follows. Deubiquitinating enzyme that removes conjugated ubiquitin from target proteins. Deubiquitinates PDPK1. Deubiquitinates TRIM21. Deubiquitinates receptor ADORA2A which increases the amount of functional receptor at the cell surface. Deubiquitinates HAS2. Deubiquitinates RHEB in response to EGF signaling, promoting mTORC1 signaling. May regulate mRNA splicing through deubiquitination of the U4 spliceosomal protein PRPF3. This may prevent its recognition by the U5 component PRPF8 thereby destabilizing interactions within the U4/U6.U5 snRNP. May also play a role in the regulation of quality control in the ER. The polypeptide is Ubiquitin carboxyl-terminal hydrolase 4 (Usp4) (Mus musculus (Mouse)).